Consider the following 657-residue polypeptide: MGEEDYYLELCERPVQFEKANPVNCVFFDEANKQVFAVRSGGATGVVVKGPDDRNPISFRMDDKGEVKCIKFSLENKILAVQRTSKTVDFCNFIPDNSQLEYTQECKTKNANILGFCWTSSTEIVFITDQGIEFYQVLPEKRSLKLLKSHNLNVNWYMYCPESAVILLSTTVLENVLQPFHFRAGTMSKLPKFEIELPAAPKSTKPSLSERDIAMATIYGQLYVLFLRHHSRTSNSTGAEVVLYHLPREGACKKMHILKLNRTGKFALNVVDNLVVVHHQDTETSVIFDIKLRGEFDGSVTFHHPVLPARSIQPYQIPITGPAAVTSQSPVPCKLYSSSWIVFQPDIIISASQGYLWNLQVKLEPIVNLLPDKGRLMDFLLQRKECKMVILSVCSQMLSESDRASLPVIATVFDKLNHEYKKYLDAEQSYAMAVEAGQSRSSPLLKRPVRTQAVLDQSDVYTHVLSAFVEKKEMPHKFVIAVLMEYIRSLNQFQIAVQHYLHELVIKTLVQHNLFYMLHQFLQYHVLSDSKPLACLLLSLESFYPPAHQLSLDMLKRLSTANDEIVEVLLSKHQVLAALRFIRGIGGHDNISARKFLDAAKQTEDNMLFYTIFRFFEQRNQRLRGSPNFTPGEHCEEHVAFFKQIFGDQALMRPTTF.

Positions 471 to 637 (KKEMPHKFVI…NFTPGEHCEE (167 aa)) constitute a Mic1 domain.

The protein belongs to the RMC1 family. In terms of assembly, found in a complex with RMC1, CCZ1 MON1A and MON1B.

It localises to the lysosome membrane. It is found in the late endosome membrane. Functionally, component of the CCZ1-MON1 RAB7A guanine exchange factor (GEF). Acts as a positive regulator of CCZ1-MON1A/B function necessary for endosomal/autophagic flux and efficient RAB7A localization. This is Regulator of MON1-CCZ1 complex from Homo sapiens (Human).